The sequence spans 665 residues: Syntabulin (665 aa).

Over residues 1–22 (MGPLRESKKEQRVQHQEKEISR) the composition is skewed to basic and acidic residues. Residues 1 to 271 (MGPLRESKKE…GVKPPNPEQY (271 aa)) are disordered. The segment at 2-421 (GPLRESKKEQ…DKLPDGLSLE (420 aa)) is sufficient for interaction with KIF5B. Positions 35–52 (PQQQQQQQNKVSPASESP) are enriched in low complexity. Ser-54 is subject to Phosphoserine. Residues 61–77 (FNPSSSGRSARTISSNS) are compositionally biased toward low complexity. Over residues 85-101 (CPSSQSVSPVKTPSDTG) the composition is skewed to polar residues. Residue Ser-111 is modified to Phosphoserine. Positions 141–162 (GGIIKPGSEADFSSSSSTGSIS) are enriched in low complexity. A compositionally biased stretch (polar residues) spans 168–180 (MSTTGNKRASFSR). Positions 225-245 (SYAPSSPSSSNSGSYKGSDCS) are enriched in low complexity. Residues 275–357 (LQQKEVTVRH…MRSSLADKDK (83 aa)) adopt a coiled-coil conformation. The segment at 314-421 (REDWIEEECH…DKLPDGLSLE (108 aa)) is sufficient for interaction with STX1A. Residues Ser-400 and Ser-557 each carry the phosphoserine modification. Residues 609–629 (FLVDLLAVAAPVVPTVLWAFS) traverse the membrane as a helical segment.

As to quaternary structure, interacts with STX1A and KIF5B.

It localises to the golgi apparatus membrane. In terms of biological role, part of a kinesin motor-adapter complex that is critical for the anterograde axonal transport of active zone components and contributes to activity-dependent presynaptic assembly during neuronal development. The protein is Syntabulin (Sybu) of Mus musculus (Mouse).